The sequence spans 429 residues: Keratin, type I cytoskeletal 18 (429 aa).

The segment at 2 to 78 (SYSRSVYSSS…NVNLIGGGQN (77 aa)) is head. Positions 79–114 (EKETMQDLNDRLASYLERVRSLEAANKKLEVQIRQH) are coil 1A. Residues 79–389 (EKETMQDLND…RLLEGDGSFD (311 aa)) enclose the IF rod domain. Residues 115 to 130 (TEKKGPSKDWSPYYKT) form a linker 1 region. The interval 131 to 222 (IEDLRKQVFD…KNHQDDVTEL (92 aa)) is coil 1B. Positions 223–246 (QAQVARSAVTVEVDAPKSQDLGKI) are linker 12. Positions 247–385 (MTELRAQYDG…HTYRRLLEGD (139 aa)) are coil 2. The tail stretch occupies residues 386–429 (GSFDLQDAVPTVTTQTVKKVITTTQRIVDGKVVSESNDTEVLKS).

This sequence belongs to the intermediate filament family. In terms of assembly, heterotetramer of two type I and two type II keratins. Keratin-18 associates with keratin-8. Phosphorylated. In terms of processing, proteolytically cleaved by caspases during epithelial cell apoptosis.

Functionally, when phosphorylated, plays a role in filament reorganization. This is Keratin, type I cytoskeletal 18 from Xenopus tropicalis (Western clawed frog).